A 441-amino-acid chain; its full sequence is Zinc finger protein ZIC 3 (441 aa).

The C2H2-type 1; atypical zinc finger occupies 222–257 (LSCKWLEESPMNRPQKTCDRTFSSMHELVTHMTMEH). The C2H2-type 2; atypical zinc-finger motif lies at 266–293 (HICYWEECPRGGKSFKAKYKLVNHIRVH). 3 consecutive C2H2-type zinc fingers follow at residues 299-323 (FPCP…KRTH), 329-353 (FKCE…MHVH), and 359-381 (YICK…MKVH). The segment at 375 to 441 (RKHMKVHESQ…LPPNFNEWYV (67 aa)) is disordered. The segment covering 383–399 (SQGSDSSPAASSGYESA) has biased composition (low complexity). The segment covering 406–429 (SANSEEPSKNSSATHQTNNSSHNT) has biased composition (polar residues).

Belongs to the GLI C2H2-type zinc-finger protein family.

It localises to the nucleus. The protein localises to the cytoplasm. Probably acts as a transcriptional activator. May bind to the minimal GLI-consensus sequence 5'-GGGTGGTC-3'. Can determine the ectodermal cell fate and promote the earliest step of neural and neural crest development. Involved in establishing left-right asymmetry in the embryo. The sequence is that of Zinc finger protein ZIC 3 (zic3) from Xenopus tropicalis (Western clawed frog).